The sequence spans 750 residues: GRIP and coiled-coil domain-containing protein C27D7.02c (750 aa).

Disordered stretches follow at residues 14–53 (AQGQ…AKNM) and 188–280 (KTVE…RDIA). 2 stretches are compositionally biased toward basic and acidic residues: residues 18–34 (EEAK…DQLR) and 188–198 (KTVETKNDVPE). The stretch at 28 to 182 (QEEDQLRRNN…AQSIEQEVIS (155 aa)) forms a coiled coil. Polar residues predominate over residues 201–213 (RPSTDTIGVSSAL). Residues 213–243 (LSKKKKKRNRKNQKKKSTKQNIEATTENDAL) adopt a coiled-coil conformation. The span at 214-230 (SKKKKKRNRKNQKKKST) shows a compositional bias: basic residues. Positions 233–251 (NIEATTENDALSESISTPD) are enriched in polar residues. Basic and acidic residues predominate over residues 269 to 280 (ADSKEEERRDIA). Residues 344–665 (KLVEELTKQL…YEHLQKSFKN (322 aa)) are a coiled coil. Residues 672–703 (KQQPSNHGRNSSVSRSSSSVEVNSKHPGSDDM) form a disordered region. Residues 676–693 (SNHGRNSSVSRSSSSVEV) are compositionally biased toward low complexity. Basic and acidic residues predominate over residues 694 to 703 (NSKHPGSDDM). Positions 700 to 748 (SDDMLIDKEYTRNILFQFLEQRDRRPEIVNLLSILLDLSEEQKQKLLSV) constitute a GRIP domain.

It localises to the cytoplasm. This Schizosaccharomyces pombe (strain 972 / ATCC 24843) (Fission yeast) protein is GRIP and coiled-coil domain-containing protein C27D7.02c.